A 519-amino-acid polypeptide reads, in one-letter code: Spermatocyte protein spe-8 (519 aa).

2 disordered regions span residues 1-39 and 73-97; these read MSGVELQPESTQSEEKEEPKTAATTISSTEETKTENPNV and NNLKKSASFDSKNQPEDSKTPKQRD. Residues 73–84 are compositionally biased toward polar residues; it reads NNLKKSASFDSK. The span at 85-97 shows a compositional bias: basic and acidic residues; that stretch reads NQPEDSKTPKQRD. In terms of domain architecture, SH2 spans 119-208; the sequence is FYHGFMGRTE…PFYDNMTLIC (90 aa). ATP is bound by residues 146 to 154 and lysine 184; that span reads VGRRVAYVI. Residues 209 to 490 form the Protein kinase domain; sequence GLARHEWQLN…KEEAGMHELD (282 aa). Aspartate 349 serves as the catalytic Proton acceptor.

It belongs to the protein kinase superfamily. Tyr protein kinase family. Fes/fps subfamily. Expressed in hermaphrodite larvae but not in adult. Expressed in both male larvae and adult.

The protein localises to the cell membrane. Its subcellular location is the cytoplasm. The catalysed reaction is L-tyrosyl-[protein] + ATP = O-phospho-L-tyrosyl-[protein] + ADP + H(+). Its function is as follows. Probable non-receptor tyrosine-protein kinase which plays a role in spermatid activation (spermiogenesis) in hermaphrodites. The polypeptide is Spermatocyte protein spe-8 (Caenorhabditis briggsae).